A 175-amino-acid polypeptide reads, in one-letter code: Probable S-adenosyl-L-methionine-binding protein VirR (175 aa).

The TsaA-like domain maps to 35–165 (LFFVGKIRTP…DRSLSKPLAP (131 aa)). S-adenosyl-L-methionine contacts are provided by residues 52-54 (PRQ), 90-91 (HE), R114, T124, and 145-148 (LDGT).

It belongs to the tRNA methyltransferase O family.

This is Probable S-adenosyl-L-methionine-binding protein VirR (virR) from Rhizobium radiobacter (Agrobacterium tumefaciens).